The following is an 850-amino-acid chain: Polyhomeotic-like protein 2 (850 aa).

5 disordered regions span residues Met1 to Gln79, Gln233 to Pro314, Leu335 to Leu386, Thr402 to Arg436, and Met528 to Gln553. Residues Ser15–Ser32 are compositionally biased toward low complexity. Residues Ser33–Asp56 are interaction with BMI1. Positions Pro343–Gln352 are enriched in low complexity. Polar residues-rich tracts occupy residues Leu368–Ser380 and Thr402–Gly425. Low complexity predominate over residues Thr529–Ala543. The short motif at Lys550–Val579 is the HD1 element. Glycyl lysine isopeptide (Lys-Gly) (interchain with G-Cter in SUMO2) cross-links involve residues Lys590 and Lys592. The segment at Phe597–Lys624 is disordered. Residue Thr611 is modified to Phosphothreonine. A Phosphoserine modification is found at Ser613. Residue Lys624 forms a Glycyl lysine isopeptide (Lys-Gly) (interchain with G-Cter in SUMO2) linkage. The FCS-type zinc-finger motif lies at Glu625–Lys659. Cys634, Cys637, Cys653, and Cys657 together coordinate Zn(2+). Disordered stretches follow at residues Arg676–Val712 and Ser725–Pro764. Lys694 is covalently cross-linked (Glycyl lysine isopeptide (Lys-Gly) (interchain with G-Cter in SUMO2)). Over residues Ser696–Val712 the composition is skewed to polar residues. Ser743 carries the post-translational modification Phosphoserine. The region spanning Trp786–Ser850 is the SAM domain. A Glycyl lysine isopeptide (Lys-Gly) (interchain with G-Cter in SUMO2) cross-link involves residue Lys839.

Component of a PRC1-like complex. Interacts with CBX4. Interacts with BMI1, PCGF2, PHC1 and RNF2. Interacts with CHTOP. Interacts with the N-terminal region of the SP1 transcription factor and with MAPKAPK2. Interacts with SAMD7. Interacts with SAMD11. In terms of tissue distribution, isoform 2 is ubiquitously expressed in embryos and adult tissues at much higher level than isoform 1.

Its subcellular location is the nucleus. Component of a Polycomb group (PcG) multiprotein PRC1-like complex, a complex class required to maintain the transcriptionally repressive state of many genes, including Hox genes, throughout development. PcG PRC1 complex acts via chromatin remodeling and modification of histones; it mediates monoubiquitination of histone H2A 'Lys-119', rendering chromatin heritably changed in its expressibility. In Mus musculus (Mouse), this protein is Polyhomeotic-like protein 2 (Phc2).